Reading from the N-terminus, the 1500-residue chain is Carbamoyl-phosphate synthase [ammonia], mitochondrial (1500 aa).

The N-terminal 38 residues, M1–L38, are a transit peptide targeting the mitochondrion. The interval L39–T218 is anthranilate phosphoribosyltransferase homolog. 4 positions are modified to N6-acetyllysine; alternate: K44, K55, K57, and K119. K44, K55, K57, and K119 each carry N6-succinyllysine; alternate. K55 carries the post-translational modification N6-glutaryllysine; alternate. S148 is modified (phosphoserine). 2 positions are modified to N6-acetyllysine; alternate: K157 and K171. Position 157 is an N6-succinyllysine; alternate (K157). Position 171 is an N6-glutaryllysine; alternate (K171). The residue at position 176 (K176) is an N6-glutaryllysine. K182 bears the N6-acetyllysine mark. S189 is subject to Phosphoserine. K197 carries the post-translational modification N6-acetyllysine. Residues K207, K210, K214, K219, and K228 each carry the N6-acetyllysine; alternate modification. N6-succinyllysine; alternate is present on K207. Residues K207, K210, K214, K219, and K228 each carry the N6-glutaryllysine; alternate modification. Position 214 is an N6-succinyllysine; alternate (K214). One can recognise a Glutamine amidotransferase type-1 domain in the interval K219–T404. At K237 the chain carries N6-glutaryllysine. The residue at position 279 (K279) is an N6-acetyllysine. Residues K280, K287, K307, and K310 each carry the N6-acetyllysine; alternate modification. K280 is subject to N6-glutaryllysine; alternate. Residues K287 and K307 each carry the N6-succinyllysine; alternate modification. N6-glutaryllysine; alternate is present on residues K307 and K310. K400 is subject to N6-succinyllysine. N6-succinyllysine; alternate is present on residues K402 and K412. Residues K402, K412, K453, and K458 each carry the N6-glutaryllysine; alternate modification. Residues K412, K453, K458, K522, K527, and K532 each carry the N6-acetyllysine; alternate modification. N6-succinyllysine; alternate occurs at positions 458, 522, and 527. N6-glutaryllysine; alternate occurs at positions 527 and 532. At S537 the chain carries Phosphoserine; alternate. S537 carries an O-linked (GlcNAc) serine; alternate glycan. Position 540 is a phosphoserine (S540). The region spanning S551 to L743 is the ATP-grasp 1 domain. K553 and K560 each carry N6-acetyllysine; alternate. 2 positions are modified to N6-succinyllysine; alternate: K553 and K560. K553 is subject to N6-glutaryllysine; alternate. Position 569 is a phosphoserine (S569). N6-acetyllysine; alternate occurs at positions 575, 603, and 612. N6-succinyllysine; alternate is present on residues K575, K603, and K612. K630 carries the post-translational modification N6-acetyllysine. K728 is modified (N6-glutaryllysine). An N6-acetyllysine; alternate mark is found at K751, K757, K772, K793, K811, K831, K840, K841, K856, K875, K889, and K892. K751 and K757 each carry N6-succinyllysine; alternate. 4 positions are modified to N6-glutaryllysine; alternate: K757, K772, K793, and K811. An N6-succinyllysine; alternate modification is found at K793. K831 and K840 each carry N6-succinyllysine; alternate. N6-glutaryllysine; alternate occurs at positions 841, 856, 875, 889, and 892. N6-succinyllysine; alternate occurs at positions 875, 889, and 892. A phosphoserine mark is found at S896 and S898. N6-acetyllysine; alternate occurs at positions 908, 915, and 919. An N6-glutaryllysine; alternate mark is found at K908, K915, and K919. N6-succinyllysine; alternate occurs at positions 915 and 919. K935 carries the post-translational modification N6-acetyllysine. S1036 carries the post-translational modification Phosphoserine. An N6-acetyllysine; alternate modification is found at K1074. N6-succinyllysine; alternate is present on K1074. The residue at position 1074 (K1074) is an N6-glutaryllysine; alternate. S1079, S1090, and S1093 each carry phosphoserine. Positions S1093–I1284 constitute an ATP-grasp 2 domain. K1100 is modified (N6-acetyllysine; alternate). Residue K1100 is modified to N6-succinyllysine; alternate. K1149 carries the post-translational modification N6-succinyllysine. N6-acetyllysine; alternate is present on residues K1168 and K1183. N6-succinyllysine; alternate occurs at positions 1168 and 1183. K1168 and K1183 each carry N6-glutaryllysine; alternate. S1203 is modified (phosphoserine). K1222 carries the post-translational modification N6-acetyllysine. The residue at position 1224 (K1224) is an N6-glutaryllysine. N6-acetyllysine; alternate occurs at positions 1232, 1269, and 1291. K1232, K1269, and K1291 each carry N6-succinyllysine; alternate. O-linked (GlcNAc) serine glycosylation is present at S1331. T1332 carries O-linked (GlcNAc) threonine glycosylation. The 146-residue stretch at F1355 to A1500 folds into the MGS-like domain. K1356 is modified (N6-acetyllysine; alternate). Residues K1356 and K1360 each carry the N6-succinyllysine; alternate modification. K1356 and K1360 each carry N6-glutaryllysine; alternate. N-acetyl-L-glutamate is bound by residues T1391, T1394, and W1410. 2 positions are modified to phosphoserine: S1419 and S1431. N-acetyl-L-glutamate is bound by residues N1437 and N1440. An N6-acetyllysine; alternate modification is found at K1444. K1444 is subject to N6-succinyllysine; alternate. N1449 is a binding site for N-acetyl-L-glutamate. 3 positions are modified to N6-acetyllysine; alternate: K1471, K1479, and K1486. N6-succinyllysine; alternate occurs at positions 1471, 1479, and 1486. An N6-glutaryllysine; alternate mark is found at K1479 and K1486.

As to quaternary structure, can form homooligomers (monomers as predominant form and dimers). In terms of assembly, (Microbial infection) Interacts with P.berghei (ANKA strain) phospholipid scramblase PLSCR; the interaction is involved in the interaction between parasite sporozoites and host hepatocytes. Post-translationally, undergoes proteolytic cleavage in the C-terminal region corresponding to the loss of approximately 12 AA residues from the C-terminus. Acetylation of Lys-287, Lys-603, Lys-841 and Lys-1291 is observed in liver mitochondria from fasted mice but not from fed mice. In terms of processing, succinylated at Lys-44, Lys-287 and Lys-1291. Desuccinylated at Lys-1291 by SIRT5, leading to activation. Post-translationally, glutarylated. Glutarylation levels increase during fasting. Deglutarylated by SIRT5 at Lys-55, Lys-219, Lys-412, Lys-889, Lys-892, Lys-915, Lys-1360 and Lys-1486, leading to activation. Expressed in hepatocytes (at protein level).

Its subcellular location is the mitochondrion. The protein localises to the nucleus. The protein resides in the nucleolus. It is found in the cell membrane. It carries out the reaction hydrogencarbonate + NH4(+) + 2 ATP = carbamoyl phosphate + 2 ADP + phosphate + 2 H(+). Requires N-acetyl-L-glutamate (NAG) as an allosteric activator. Involved in the urea cycle of ureotelic animals where the enzyme plays an important role in removing excess ammonia from the cell. This is Carbamoyl-phosphate synthase [ammonia], mitochondrial (Cps1) from Mus musculus (Mouse).